We begin with the raw amino-acid sequence, 63 residues long: Prokaryotic ubiquitin-like protein UBact (63 aa).

Residues 1 to 63 (MSGRSTFGRF…SRRYRQRTGE (63 aa)) form a disordered region. Basic and acidic residues predominate over residues 17-50 (PWERKPGDDEGGPKRPKVERPDTNDLLKRMRRVD). Residue glutamate 63 forms an Isoglutamyl lysine isopeptide (Glu-Lys) (interchain with K-? in acceptor proteins) linkage.

The protein belongs to the ubiquitin-like protein UBact family.

Its function is as follows. May function as a protein modifier covalently attached to lysine residues of substrate proteins. This may serve to target the modified proteins for degradation by proteasomes. The chain is Prokaryotic ubiquitin-like protein UBact from Handelsmanbacteria sp. (strain RIFCSPLOWO2_12_FULL_64_10).